The chain runs to 314 residues: DNA-directed RNA polymerase subunit alpha (314 aa).

Residues 1-228 (MIEFEKPNIH…EHLAMFVDLT (228 aa)) are alpha N-terminal domain (alpha-NTD). The alpha C-terminal domain (alpha-CTD) stretch occupies residues 245-314 (KEKMLEMTIE…DLGVSFRQDD (70 aa)).

The protein belongs to the RNA polymerase alpha chain family. Homodimer. The RNAP catalytic core consists of 2 alpha, 1 beta, 1 beta' and 1 omega subunit. When a sigma factor is associated with the core the holoenzyme is formed, which can initiate transcription.

The catalysed reaction is RNA(n) + a ribonucleoside 5'-triphosphate = RNA(n+1) + diphosphate. In terms of biological role, DNA-dependent RNA polymerase catalyzes the transcription of DNA into RNA using the four ribonucleoside triphosphates as substrates. The sequence is that of DNA-directed RNA polymerase subunit alpha from Limosilactobacillus reuteri (strain DSM 20016) (Lactobacillus reuteri).